The primary structure comprises 126 residues: Heavy metal-associated isoprenylated plant protein 14 (126 aa).

The HMA domain occupies 3–69; the sequence is AKNAVLQLSI…LCNTEIVSVD (67 aa). A Cysteine methyl ester modification is found at Cys-123. A lipid anchor (S-farnesyl cysteine) is attached at Cys-123. Positions 124-126 are cleaved as a propeptide — removed in mature form; it reads VIM.

Belongs to the HIPP family.

Probable heavy-metal-binding protein. The protein is Heavy metal-associated isoprenylated plant protein 14 of Arabidopsis thaliana (Mouse-ear cress).